Consider the following 479-residue polypeptide: Glycerol-3-phosphate acyltransferase RAM2 (479 aa).

A run of 4 helical transmembrane segments spans residues 14 to 34, 37 to 57, 215 to 235, and 237 to 257; these read YFAL…LVLA, LAGL…LIFA, SPLM…LACL, and IAAG…ALGV. The short motif at 284 to 289 is the HXXXXD motif element; the sequence is HRTLLD. Asn-448 is a glycosylation site (N-linked (GlcNAc...) asparagine).

It belongs to the GPAT/DAPAT family.

Its subcellular location is the membrane. It catalyses the reaction sn-glycerol 3-phosphate + an acyl-CoA = a 1-acyl-sn-glycero-3-phosphate + CoA. It participates in lipid metabolism; glycerolipid metabolism. Involved in the production of cutin monomers. Esterifies acyl-group from acyl-ACP to the sn-2 position of glycerol-3-phosphate, a step in cutin biosynthesis. Required for colonization of the root by mycorrhizal fungi, and appropriate hyphopodia and arbuscule formation. Cutin monomers act as plant signals that promote colonization by arbuscular mycorrhizal fungi. This signaling function has been recruited by pathogenic oomycetes to facilitate appressoria formation and their own invasion. The chain is Glycerol-3-phosphate acyltransferase RAM2 from Petunia hybrida (Petunia).